The chain runs to 133 residues: MSFNPDYESVAKAFIQHYYSKFDVGDGMSRAQGLSDLYDPENSYMTFEGQQAKGRDGILQKFTTLGFTKIQRAITVIDSQPLYDGSIQVMVLGQLKTDEDPINPFSQVFILRPNNQGSYFIGNEIFRLDLHNN.

Positions 10–128 (VAKAFIQHYY…YFIGNEIFRL (119 aa)) constitute an NTF2 domain.

It is found in the cytoplasm. Facilitates protein transport into the nucleus. Could be part of a multicomponent system of cytosolic factors that assemble at the pore complex during nuclear import. The protein is Probable nuclear transport factor 2 (ran-4) of Caenorhabditis elegans.